A 345-amino-acid polypeptide reads, in one-letter code: Probable aldo-keto reductase 3 (345 aa).

Catalysis depends on Y63, which acts as the Proton donor. H130 is a substrate binding site. 209–219 (SPLGRGFFASG) serves as a coordination point for NADP(+).

The protein belongs to the aldo/keto reductase family.

This is Probable aldo-keto reductase 3 from Arabidopsis thaliana (Mouse-ear cress).